A 152-amino-acid polypeptide reads, in one-letter code: Pertussis toxin subunit 4 (152 aa).

An N-terminal signal peptide occupies residues 1 to 42; the sequence is MLRRFPTRTTAPGQGGARRSRVRALAWLLASGAMTHLSPALA. Intrachain disulfides connect Cys73-Cys93 and Cys145-Cys151.

In terms of assembly, pertussis toxin contains five different chains, S1-S5. They are organized into 2 functional subunits: A, composed of S1 (which is toxic) and B, containing S2, S3, S5, and two copies of S4 (B binds to the membrane receptors). Dimers of S2-S4 and S3-S4 are held together by S5.

Its subcellular location is the secreted. It is found in the host cell membrane. PTX oligomer B binds to receptors on the eukaryotic cell surface and facilitates the translocation of the toxic subunit across the cell membrane. This Bordetella parapertussis (strain 12822 / ATCC BAA-587 / NCTC 13253) protein is Pertussis toxin subunit 4 (ptxD).